The following is a 134-amino-acid chain: UPF0102 protein Dshi_2830 (134 aa).

The protein belongs to the UPF0102 family.

This chain is UPF0102 protein Dshi_2830, found in Dinoroseobacter shibae (strain DSM 16493 / NCIMB 14021 / DFL 12).